The primary structure comprises 602 residues: Elongation factor 4 (602 aa).

The tr-type G domain occupies 7-189 (RNIRNFSIIA…AIVQRIPAPQ (183 aa)). Residues 19 to 24 (DHGKST) and 136 to 139 (NKID) each bind GTP.

The protein belongs to the TRAFAC class translation factor GTPase superfamily. Classic translation factor GTPase family. LepA subfamily.

The protein resides in the cell inner membrane. The catalysed reaction is GTP + H2O = GDP + phosphate + H(+). Its function is as follows. Required for accurate and efficient protein synthesis under certain stress conditions. May act as a fidelity factor of the translation reaction, by catalyzing a one-codon backward translocation of tRNAs on improperly translocated ribosomes. Back-translocation proceeds from a post-translocation (POST) complex to a pre-translocation (PRE) complex, thus giving elongation factor G a second chance to translocate the tRNAs correctly. Binds to ribosomes in a GTP-dependent manner. The polypeptide is Elongation factor 4 (Xylella fastidiosa (strain M12)).